The chain runs to 242 residues: DNA repair protein RecO (242 aa).

The protein belongs to the RecO family. In terms of assembly, monomer.

Functionally, involved in DNA repair and RecF pathway recombination. In Shigella flexneri, this protein is DNA repair protein RecO.